Consider the following 334-residue polypeptide: HTH-type transcriptional repressor PurR (334 aa).

Positions 2-56 constitute an HTH lacI-type domain; sequence ATIKDVARLAGVSTTTVSHVINKTRFVAEATQEKVNKAVDELNYAPSAVARSLKC. The H-T-H motif DNA-binding region spans 4 to 23; it reads IKDVARLAGVSTTTVSHVIN. A DNA-binding region spans residues 48-56; it reads SAVARSLKC. Residues phenylalanine 73, lysine 189, phenylalanine 220, and aspartate 274 each coordinate hypoxanthine.

In terms of assembly, homodimer.

It functions in the pathway purine metabolism; purine nucleotide biosynthesis [regulation]. Is the main repressor of the genes involved in the de novo synthesis of purine nucleotides, regulating purB, purC, purEK, purF, purHD, purL, purMN and guaBA expression. PurR is allosterically activated to bind its cognate DNA by binding the purine corepressors, hypoxanthine or guanine, thereby effecting transcription repression. This is HTH-type transcriptional repressor PurR from Vibrio atlanticus (strain LGP32) (Vibrio splendidus (strain Mel32)).